We begin with the raw amino-acid sequence, 89 residues long: Small ribosomal subunit protein uS15 (89 aa).

Positions 1–10 (MSITAERKAE) are enriched in basic and acidic residues. The segment at 1–24 (MSITAERKAEVIQGNANKAGDTGS) is disordered.

This sequence belongs to the universal ribosomal protein uS15 family. In terms of assembly, part of the 30S ribosomal subunit. Forms a bridge to the 50S subunit in the 70S ribosome, contacting the 23S rRNA.

In terms of biological role, one of the primary rRNA binding proteins, it binds directly to 16S rRNA where it helps nucleate assembly of the platform of the 30S subunit by binding and bridging several RNA helices of the 16S rRNA. Forms an intersubunit bridge (bridge B4) with the 23S rRNA of the 50S subunit in the ribosome. This is Small ribosomal subunit protein uS15 from Rhodopseudomonas palustris (strain HaA2).